Here is a 478-residue protein sequence, read N- to C-terminus: JmjC domain-containing histone demethylation protein 1 (478 aa).

The PHD-type zinc-finger motif lies at Ser5 to Lys68. The JmjC domain occupies Ser217–Arg383. Thr266 serves as a coordination point for substrate. Residues His269 and Asp271 each coordinate Fe cation. Lys286 lines the substrate pocket. His351 is a Fe cation binding site.

Belongs to the JHDM1 histone demethylase family. Fe(2+) is required as a cofactor.

It localises to the nucleus. It catalyses the reaction N(6),N(6)-dimethyl-L-lysyl(36)-[histone H3] + 2 2-oxoglutarate + 2 O2 = L-lysyl(36)-[histone H3] + 2 formaldehyde + 2 succinate + 2 CO2. Its function is as follows. Histone demethylase that specifically demethylates 'Lys-36' of histone H3, thereby playing a central role in histone code. The polypeptide is JmjC domain-containing histone demethylation protein 1 (JHD1) (Candida albicans (strain SC5314 / ATCC MYA-2876) (Yeast)).